A 486-amino-acid polypeptide reads, in one-letter code: Malonate-semialdehyde dehydrogenase (486 aa).

Phenylalanine 154, lysine 178, glutamate 181, arginine 182, and serine 231 together coordinate NAD(+). Cysteine 286 (nucleophile) is an active-site residue. Position 386 (glutamate 386) interacts with NAD(+).

This sequence belongs to the aldehyde dehydrogenase family. IolA subfamily. Homotetramer.

The enzyme catalyses 3-oxopropanoate + NAD(+) + CoA + H2O = hydrogencarbonate + acetyl-CoA + NADH + H(+). It catalyses the reaction 2-methyl-3-oxopropanoate + NAD(+) + CoA + H2O = propanoyl-CoA + hydrogencarbonate + NADH + H(+). The protein operates within polyol metabolism; myo-inositol degradation into acetyl-CoA; acetyl-CoA from myo-inositol: step 7/7. In terms of biological role, catalyzes the oxidation of malonate semialdehyde (MSA) and methylmalonate semialdehyde (MMSA) into acetyl-CoA and propanoyl-CoA, respectively. Is involved in a myo-inositol catabolic pathway. Bicarbonate, and not CO2, is the end-product of the enzymatic reaction. The protein is Malonate-semialdehyde dehydrogenase of Bacillus cytotoxicus (strain DSM 22905 / CIP 110041 / 391-98 / NVH 391-98).